Consider the following 166-residue polypeptide: Cytochrome b (166 aa).

4 consecutive transmembrane segments (helical) span residues 15 to 35 (FKDI…VLIN), 77 to 97 (LGGV…PFYN), 109 to 129 (INQI…WIGA), and 136 to 156 (YVLL…INPL).

This sequence belongs to the cytochrome b family. In terms of assembly, the main subunits of complex b-c1 are: cytochrome b, cytochrome c1 and the Rieske protein. Heme is required as a cofactor.

It is found in the mitochondrion inner membrane. Functionally, component of the ubiquinol-cytochrome c reductase complex (complex III or cytochrome b-c1 complex) that is part of the mitochondrial respiratory chain. The b-c1 complex mediates electron transfer from ubiquinol to cytochrome c. Contributes to the generation of a proton gradient across the mitochondrial membrane that is then used for ATP synthesis. The sequence is that of Cytochrome b (mt:Cyt-b) from Drosophila subobscura (Fruit fly).